The primary structure comprises 367 residues: Biotin synthase (367 aa).

The Radical SAM core domain maps to 73 to 308 (CCGNTVDLCS…EQIIRYAGGR (236 aa)). 3 residues coordinate [4Fe-4S] cluster: Cys-91, Cys-95, and Cys-98. The [2Fe-2S] cluster site is built by Cys-136, Cys-173, Cys-233, and Arg-303.

It belongs to the radical SAM superfamily. Biotin synthase family. In terms of assembly, homodimer. Requires [4Fe-4S] cluster as cofactor. [2Fe-2S] cluster serves as cofactor.

It carries out the reaction (4R,5S)-dethiobiotin + (sulfur carrier)-SH + 2 reduced [2Fe-2S]-[ferredoxin] + 2 S-adenosyl-L-methionine = (sulfur carrier)-H + biotin + 2 5'-deoxyadenosine + 2 L-methionine + 2 oxidized [2Fe-2S]-[ferredoxin]. It participates in cofactor biosynthesis; biotin biosynthesis; biotin from 7,8-diaminononanoate: step 2/2. Catalyzes the conversion of dethiobiotin (DTB) to biotin by the insertion of a sulfur atom into dethiobiotin via a radical-based mechanism. The sequence is that of Biotin synthase from Picosynechococcus sp. (strain ATCC 27264 / PCC 7002 / PR-6) (Agmenellum quadruplicatum).